A 294-amino-acid chain; its full sequence is Cytosolic Fe-S cluster assembly factor CFD1 (294 aa).

25 to 32 (GKGGVGKS) lines the ATP pocket. [4Fe-4S] cluster-binding residues include C214 and C217.

This sequence belongs to the Mrp/NBP35 ATP-binding proteins family. NUBP2/CFD1 subfamily. In terms of assembly, heterotetramer of 2 NBP35 and 2 CFD1 chains. [4Fe-4S] cluster serves as cofactor.

It localises to the cytoplasm. In terms of biological role, component of the cytosolic iron-sulfur (Fe/S) protein assembly (CIA) machinery. Required for maturation of extramitochondrial Fe-S proteins. The NBP35-CFD1 heterotetramer forms a Fe-S scaffold complex, mediating the de novo assembly of an Fe-S cluster and its transfer to target apoproteins. Required for biogenesis and export of both ribosomal subunits, which may reflect a role in assembly of the Fe/S clusters in RLI1, a protein which performs rRNA processing and ribosome export. This is Cytosolic Fe-S cluster assembly factor CFD1 from Candida albicans (strain SC5314 / ATCC MYA-2876) (Yeast).